We begin with the raw amino-acid sequence, 491 residues long: Cytochrome P450 2B4 (491 aa).

Position 128 is a phosphoserine; by PKA (S128). Residue C436 coordinates heme.

This sequence belongs to the cytochrome P450 family. Requires heme as cofactor.

The protein resides in the endoplasmic reticulum membrane. Its subcellular location is the microsome membrane. It catalyses the reaction an organic molecule + reduced [NADPH--hemoprotein reductase] + O2 = an alcohol + oxidized [NADPH--hemoprotein reductase] + H2O + H(+). Functionally, cytochromes P450 are a group of heme-thiolate monooxygenases. In liver microsomes, this enzyme is involved in an NADPH-dependent electron transport pathway. It oxidizes a variety of structurally unrelated compounds, including steroids, fatty acids, and xenobiotics. In the epoxidation of arachidonic acid it has a unique preference for the 5,6-olefin. The protein is Cytochrome P450 2B4 (CYP2B4) of Oryctolagus cuniculus (Rabbit).